The following is a 69-amino-acid chain: Large ribosomal subunit protein bL31 (69 aa).

This sequence belongs to the bacterial ribosomal protein bL31 family. Type A subfamily. As to quaternary structure, part of the 50S ribosomal subunit.

In terms of biological role, binds the 23S rRNA. The polypeptide is Large ribosomal subunit protein bL31 (Mycoplasmopsis pulmonis (strain UAB CTIP) (Mycoplasma pulmonis)).